We begin with the raw amino-acid sequence, 512 residues long: Pentatricopeptide repeat-containing protein At1g64583, mitochondrial (512 aa).

The transit peptide at 1 to 34 directs the protein to the mitochondrion; that stretch reads MRRLIVTGIATSTAKGFRRVVNPNLLGGGAAARA. 12 PPR repeats span residues 70-104, 105-139, 140-174, 175-209, 210-244, 245-279, 280-314, 315-349, 350-384, 385-415, 420-454, and 455-489; these read SIVD…GISH, DLYS…GYEP, SIVT…GYEP, NVVV…GLGA, DVVT…SINP, DVVT…SVDP, NNVT…GCFP, NVVT…GFNA, DIFT…RVTP, DIIT…MRES, GIVA…GVKP, and DART…GIIC.

It belongs to the PPR family. P subfamily.

It is found in the mitochondrion. The chain is Pentatricopeptide repeat-containing protein At1g64583, mitochondrial from Arabidopsis thaliana (Mouse-ear cress).